The following is a 135-amino-acid chain: Large ribosomal subunit protein bL19 (135 aa).

Belongs to the bacterial ribosomal protein bL19 family.

This protein is located at the 30S-50S ribosomal subunit interface and may play a role in the structure and function of the aminoacyl-tRNA binding site. The protein is Large ribosomal subunit protein bL19 of Xanthomonas axonopodis pv. citri (strain 306).